The following is a 107-amino-acid chain: uncharacterized protein (107 aa).

A compositionally biased stretch (basic and acidic residues) spans 88–97; the sequence is EEKKEKDKGK. The disordered stretch occupies residues 88 to 107; sequence EEKKEKDKGKKGLLSRLKFW. Positions 98–107 are enriched in basic residues; it reads KGLLSRLKFW.

This is an uncharacterized protein from Methanocaldococcus jannaschii (strain ATCC 43067 / DSM 2661 / JAL-1 / JCM 10045 / NBRC 100440) (Methanococcus jannaschii).